The following is a 482-amino-acid chain: Mannan endo-1,4-beta-mannosidase (482 aa).

A signal peptide spans 1 to 21 (MARTLRYLLCGILALAAGSNA). The CBM6 domain maps to 42-160 (TTYEAEDAIL…WYLVDSITLT (119 aa)). Residues N171 and N300 are each glycosylated (N-linked (GlcNAc...) asparagine). In terms of domain architecture, GH26 spans 181–474 (ASARALYDYL…YTSDYVLTLD (294 aa)). The active-site Proton donor is E332. The active-site Nucleophile is the E422.

Belongs to the glycosyl hydrolase 26 family.

The protein resides in the secreted. With respect to regulation, the activity is completely impaired by Ag(+), partially inhibited by Zn(2+), and enhanced by Co(2+), Ni(2+) and Cu(2+) by 22.6, 14.5 and 20.8 %, respectively. Ca(2+), Na(+), Mg(2+), Mn(2+), urea and EDTA do not significantly affect the mannanase activity. Its function is as follows. Mannan endo-1,4-beta-mannosidase that exhibits high activity against konjac glucomannan and carob galactomannan, as well as a lower activity toward beta-mannan. Shows no activity against barley beta-glucan, birchwood xylan, and low viscosity carboxymethyl cellulose (CMC). Has the ability to hydrolyze manno-oligosaccharides such as M4 which is degraded slightly to M3 and M1, M5 which is mainly degraded to M4 and M1, and M6 which is mostly hydrolyzed to M4 and M2. Shows no activity toward M2 and M3 manno-oligosaccharides. This Thermothelomyces thermophilus (strain ATCC 42464 / BCRC 31852 / DSM 1799) (Sporotrichum thermophile) protein is Mannan endo-1,4-beta-mannosidase.